Here is a 681-residue protein sequence, read N- to C-terminus: Potassium-transporting ATPase ATP-binding subunit (681 aa).

The next 4 membrane-spanning stretches (helical) occupy residues 30-50 (LLVYVGAILATSLYFLGFFGI), 59-79 (LAIALILWFTVLFANFAEAIA), 216-236 (ILLVTLSIIFLTVSATLLPFT), and 255-275 (IALLVCLAPTTIGALLSSIGI). Catalysis depends on Asp306, which acts as the 4-aspartylphosphate intermediate. ATP-binding positions include Asp343, Glu347, 376 to 383 (FTATTRMS), and Lys394. The Mg(2+) site is built by Asp517 and Asp521. The next 3 helical transmembrane spans lie at 587-607 (FAIIPVLFYGIFPQLEALNLM), 615-635 (AILSAIIYNAVIIIILIPLSL), and 661-681 (LIAPFIAIKLIDMLLTVLGIV).

Belongs to the cation transport ATPase (P-type) (TC 3.A.3) family. Type IA subfamily. As to quaternary structure, the system is composed of three essential subunits: KdpA, KdpB and KdpC.

Its subcellular location is the cell membrane. The catalysed reaction is K(+)(out) + ATP + H2O = K(+)(in) + ADP + phosphate + H(+). Part of the high-affinity ATP-driven potassium transport (or Kdp) system, which catalyzes the hydrolysis of ATP coupled with the electrogenic transport of potassium into the cytoplasm. This subunit is responsible for energy coupling to the transport system and for the release of the potassium ions to the cytoplasm. The protein is Potassium-transporting ATPase ATP-binding subunit of Listeria monocytogenes serotype 4a (strain HCC23).